Here is a 1133-residue protein sequence, read N- to C-terminus: MVSETTTNRSTVKISNVPQTIVADELLRFLELHLGEDTVFALEIPTTRDNWKPRDFARVQFTTLEVKSRAQLLSSQSKLLFKTHNLRLSEAYDDIIPRPVDPRKRLDDIVLTVGFPESDEKRFCALEKWDGVRCWILTEKRRVEFWVWESGDCYKIEVRFEDIIETLSCCVNGDASEIDAFLLKLKYGPKVFKRVTVHIATKFKSDRYRFCKEDFDFMWIRTTDFSGSKSIGTSTCFCLEVHNGSTMLDIFSGLPYYREDTLSLTYVDGKTFASAAQIVPLLNAAILGLEFPYEILFQLNALVHAQKISLFAASDMELIKILRGMSLETALVILKKLHQQSSICYDPVFFVKTQMQSVVKKMKHSPASAYKRLTEQNIMSCQRAYVTPSKIYLLGPELETANYVVKNFAEHVSDFMRVTFVEEDWSKLPANALSVNSKEGYFVKPSRTNIYNRVLSILGEGITVGPKRFEFLAFSASQLRGNSVWMFASNEKVKAEDIREWMGCFRKIRSISKCAARMGQLFSASRQTLIVRAQDVEQIPDIEVTTDGADYCFSDGIGKISLAFAKQVAQKCGLSHVPSAFQIRYGGYKGVIAVDRSSFRKLSLRDSMLKFDSNNRMLNVTRWTESMPCFLNREIICLLSTLGIEDAMFEAMQAVHLSMLGNMLEDRDAALNVLQKLSGENSKNLLVKMLLQGYAPSSEPYLSMMLRVHHESQLSELKSRCRILVPKGRILIGCMDEMGILEYGQVYVRVTLTKAELKSRDQSYFRKIDEETSVVIGKVVVTKNPCLHPGDIRVLDAIYEVHFEEKGYLDCIIFPQKGERPHPNECSGGDLDGDQFFVSWDEKIIPSEMDPPMDYAGSRPRLMDHDVTLEEIHKFFVDYMISDTLGVISTAHLVHADRDPEKARSQKCLELANLHSRAVDFAKTGAPAEMPYALKPREFPDFLERFEKPTYISESVFGKLYRAVKSSLAQRKPEAESEDTVAYDVTLEEAGFESFIETAKAHRDMYGEKLTSLMIYYGAANEEEILTGILKTKEMYLARDNRRYGDMKDRITLSVKDLHKEAMGWFEKSCEDEQQKKKLASAWYYVTYNPNHRDEKLTFLSFPWIVGDVLLDIKAENAQRQSVEEKTSGLVSI.

3 residues coordinate Mg(2+): D830, D832, and D834.

It belongs to the RdRP family. In terms of assembly, interacts with NRPD1 and SHH1. Associates with Pol IV complex, forming an interpolymerase channel bridging their active sites, through which the Pol IV-generated transcript is handed over to the RDR2 active site after being backtracked, where it is used as the template for double-stranded RNA (dsRNA) synthesis. Interacts with JMJ24.

It is found in the nucleus. The protein resides in the nucleoplasm. The protein localises to the nucleolus. The catalysed reaction is RNA(n) + a ribonucleoside 5'-triphosphate = RNA(n+1) + diphosphate. Its function is as follows. RNA-dependent direct polymerase involved in the production of small interfering RNAs (siRNAs). Binds to single-stranded RNA (ssRNA); engages ssRNAs longer than 7 nucleotides and initiates internal to their 3' ends. Able to transcribe the RNA of an RNA/DNA hybrid, the transcript produced by Pol IV, if its 3' end is accessible, to generate double-stranded small interfering RNAs (dsRNAs) precursor essential for establishing and maintaining DNA methylation. Required for the biogenesis of endogenous siRNAs of 24 nucleotide which derive from heterochromatin and DNA repeats such as transposons or endogenous gene tandem repeats, such as repeats present in FWA gene. Involved in transcriptional gene silencing (TGS). Component of the RNA-directed DNA methylation (RdDM) silencing pathway that utilizes siRNAs to guide DNA methyltransferases to asymmetric cytosines. Involved in control of flowering time through RdDM of FWA locus. Required for reception of long-distance mRNA silencing in the shoot. Required for the formation of telomeric siRNAs and the RNA-dependent DNA methylation of asymmetric cytosines in telomeric (5'-CCCTAAA-3') repeats. This is RNA-dependent RNA polymerase 2 from Arabidopsis thaliana (Mouse-ear cress).